Here is a 166-residue protein sequence, read N- to C-terminus: FMN reductase (NADH) RutF (166 aa).

The protein belongs to the non-flavoprotein flavin reductase family. RutF subfamily.

It carries out the reaction FMNH2 + NAD(+) = FMN + NADH + 2 H(+). Functionally, catalyzes the reduction of FMN to FMNH2 which is used to reduce pyrimidine by RutA via the Rut pathway. The polypeptide is FMN reductase (NADH) RutF (Cronobacter turicensis (strain DSM 18703 / CCUG 55852 / LMG 23827 / z3032)).